Reading from the N-terminus, the 255-residue chain is Aliphatic sulfonates import ATP-binding protein SsuB (255 aa).

Positions 5 to 231 (IRVNEKAFGK…PRSRTSPVFQ (227 aa)) constitute an ABC transporter domain. 39–46 (GPSGCGKS) is a binding site for ATP.

Belongs to the ABC transporter superfamily. Aliphatic sulfonates importer (TC 3.A.1.17.2) family. As to quaternary structure, the complex is composed of two ATP-binding proteins (SsuB), two transmembrane proteins (SsuC) and a solute-binding protein (SsuA).

It localises to the cell membrane. The catalysed reaction is ATP + H2O + aliphatic sulfonate-[sulfonate-binding protein]Side 1 = ADP + phosphate + aliphatic sulfonateSide 2 + [sulfonate-binding protein]Side 1.. In terms of biological role, part of the ABC transporter complex SsuABC involved in aliphatic sulfonates import. Responsible for energy coupling to the transport system. This is Aliphatic sulfonates import ATP-binding protein SsuB from Bacillus licheniformis (strain ATCC 14580 / DSM 13 / JCM 2505 / CCUG 7422 / NBRC 12200 / NCIMB 9375 / NCTC 10341 / NRRL NRS-1264 / Gibson 46).